A 270-amino-acid polypeptide reads, in one-letter code: Probable septum site-determining protein MinC (270 aa).

The protein belongs to the MinC family. Interacts with MinD and FtsZ.

Its function is as follows. Cell division inhibitor that blocks the formation of polar Z ring septums. Rapidly oscillates between the poles of the cell to destabilize FtsZ filaments that have formed before they mature into polar Z rings. Prevents FtsZ polymerization. This is Probable septum site-determining protein MinC from Cupriavidus necator (strain ATCC 17699 / DSM 428 / KCTC 22496 / NCIMB 10442 / H16 / Stanier 337) (Ralstonia eutropha).